The primary structure comprises 78 residues: MQPQESHVHYSRWEDGSRDGVSLGAVSSTEEASRCRRISQRLCTGKLGIAMKVLGGVALFWIIFILGYLTGYYVHKCK.

Methionine 1 is modified (N-acetylmethionine). The segment covering 1-18 (MQPQESHVHYSRWEDGSR) has biased composition (basic and acidic residues). The segment at 1 to 20 (MQPQESHVHYSRWEDGSRDG) is disordered. Residues 1–46 (MQPQESHVHYSRWEDGSRDGVSLGAVSSTEEASRCRRISQRLCTGK) are Cytoplasmic-facing. A phosphoserine mark is found at serine 6, serine 17, serine 22, and serine 27. The helical; Signal-anchor for type II membrane protein transmembrane segment at 47–67 (LGIAMKVLGGVALFWIIFILG) threads the bilayer. Over 68–78 (YLTGYYVHKCK) the chain is Extracellular. The interval 68-78 (YLTGYYVHKCK) is displays the Vel antigen.

The protein belongs to the SMIM1 family. In terms of assembly, homooligomer; disulfide-linked. In terms of tissue distribution, highly expressed in the bone marrow and expressed at lower levels in non-hematopoietic tissues. Highly expressed in erythroleukemia cell lines. Up-regulated in CD34+ hematopoietic progenitors cultured toward red blood cells.

It localises to the cell membrane. Regulator of red blood cell formation. This chain is Small integral membrane protein 1, found in Homo sapiens (Human).